We begin with the raw amino-acid sequence, 1147 residues long: Nitric oxide synthase, inducible (1147 aa).

Positions lysine 22–asparagine 51 are disordered. Positions aspartate 23–asparagine 27 match the DINNN-motif; mediates interaction with SPSB1, SPSB2 and SPSB4 motif. Residues cysteine 107 and cysteine 112 each coordinate Zn(2+). Serine 115 is a binding site for (6R)-L-erythro-5,6,7,8-tetrahydrobiopterin. Residue cysteine 197 participates in heme b binding. L-arginine contacts are provided by glutamine 260, tryptophan 369, tyrosine 370, and glutamate 374. Positions 378, 459, 460, and 473 each coordinate (6R)-L-erythro-5,6,7,8-tetrahydrobiopterin. A heme b-binding site is contributed by tyrosine 488. The tract at residues phenylalanine 512–serine 532 is calmodulin-binding. Residues alanine 536–phenylalanine 674 enclose the Flavodoxin-like domain. FMN is bound by residues threonine 542, glutamate 543, threonine 544, lysine 546, and serine 547. A Phosphothreonine modification is found at threonine 564. Phosphotyrosine is present on tyrosine 572. Residues serine 588, threonine 589, serine 625, cysteine 632, glutamate 658, and glutamine 662 each contribute to the FMN site. The 241-residue stretch at lysine 727–proline 967 folds into the FAD-binding FR-type domain. Arginine 747 is an NADP(+) binding site. Residues histidine 769, arginine 903, tyrosine 905, serine 906, threonine 921, and alanine 923 each coordinate FAD. Threonine 926 is a binding site for NADP(+). FAD is bound by residues tyrosine 927, valine 940, cysteine 941, and serine 942. Residues threonine 981, arginine 1014, serine 1043, arginine 1044, lysine 1050, tyrosine 1052, glutamine 1054, and aspartate 1087 each coordinate NADP(+).

This sequence belongs to the NOS family. Homodimer. Interacts with NHERF1. Interacts with GAPDH; induced by oxidatively-modified low-densitity lipoprotein (LDL(ox)). Interacts with S100A8 and S100A9 to form the iNOS-S100A8/9 transnitrosylase complex. Interacts with SPSB1, SPSB2 and SPSB4. Interacts with ELOC and CUL5 in the presence of SPSB1 or SPSB2 or SPSB4. Forms a complex with ASL, ASS1 and HSP90AA1; the complex regulates cell-autonomous L-arginine synthesis and citrulline recycling while channeling extracellular L-arginine to nitric oxide synthesis pathway. It depends on heme b as a cofactor. The cofactor is FAD. FMN is required as a cofactor. Requires (6R)-L-erythro-5,6,7,8-tetrahydrobiopterin as cofactor. In terms of processing, polyubiquitinated; mediated by SPSB1, SPSB2 and SPSB4, leading to proteasomal degradation. In normal kidney, expressed primarily in the medullary thick ascending limb, with minor amounts in the medullary collecting duct and vasa recta bundle.

It is found in the cytoplasm. Its subcellular location is the cytosol. The enzyme catalyses 2 L-arginine + 3 NADPH + 4 O2 + H(+) = 2 L-citrulline + 2 nitric oxide + 3 NADP(+) + 4 H2O. Not stimulated by calcium/calmodulin. Aspirin inhibits expression and function of this enzyme and effects may be exerted at the level of translational/post-translational modification and directly on the catalytic activity. In terms of biological role, produces nitric oxide (NO) which is a messenger molecule with diverse functions throughout the body. In macrophages, NO mediates tumoricidal and bactericidal actions. Also has nitrosylase activity and mediates cysteine S-nitrosylation of cytoplasmic target proteins such PTGS2/COX2. As component of the iNOS-S100A8/9 transnitrosylase complex involved in the selective inflammatory stimulus-dependent S-nitrosylation of GAPDH implicated in regulation of the GAIT complex activity and probably multiple targets including ANXA5, EZR, MSN and VIM. Involved in inflammation, enhances the synthesis of pro-inflammatory mediators such as IL6 and IL8. The protein is Nitric oxide synthase, inducible (Nos2) of Rattus norvegicus (Rat).